A 65-amino-acid chain; its full sequence is Toxin NaTx-22 (65 aa).

The LCN-type CS-alpha/beta domain maps to 1–64 (KDGYPVIKTT…TYPIPGKTCK (64 aa)). 4 disulfides stabilise this stretch: C12-C63, C16-C39, C25-C44, and C29-C46.

This sequence belongs to the long (4 C-C) scorpion toxin superfamily. Sodium channel inhibitor family. In terms of tissue distribution, expressed by the venom gland.

It localises to the secreted. Probable sodium channel inhibitor. The polypeptide is Toxin NaTx-22 (Centruroides sculpturatus (Arizona bark scorpion)).